We begin with the raw amino-acid sequence, 199 residues long: Small ribosomal subunit protein uS4 (199 aa).

Residues 106–170 (RRLQTIVFRK…SPVANELHPI (65 aa)) form the S4 RNA-binding domain. The interval 177–199 (PAQRSAEMKEGQGEASEEGETDE) is disordered.

The protein belongs to the universal ribosomal protein uS4 family. Part of the 30S ribosomal subunit. Contacts protein S5. The interaction surface between S4 and S5 is involved in control of translational fidelity.

One of the primary rRNA binding proteins, it binds directly to 16S rRNA where it nucleates assembly of the body of the 30S subunit. Its function is as follows. With S5 and S12 plays an important role in translational accuracy. The polypeptide is Small ribosomal subunit protein uS4 (Thermoplasma acidophilum (strain ATCC 25905 / DSM 1728 / JCM 9062 / NBRC 15155 / AMRC-C165)).